Reading from the N-terminus, the 180-residue chain is Large ribosomal subunit protein uL5 (180 aa).

Belongs to the universal ribosomal protein uL5 family. Part of the 50S ribosomal subunit; part of the 5S rRNA/L5/L18/L25 subcomplex. Contacts the 5S rRNA and the P site tRNA. Forms a bridge to the 30S subunit in the 70S ribosome.

Its function is as follows. This is one of the proteins that bind and probably mediate the attachment of the 5S RNA into the large ribosomal subunit, where it forms part of the central protuberance. In the 70S ribosome it contacts protein S13 of the 30S subunit (bridge B1b), connecting the 2 subunits; this bridge is implicated in subunit movement. Contacts the P site tRNA; the 5S rRNA and some of its associated proteins might help stabilize positioning of ribosome-bound tRNAs. The chain is Large ribosomal subunit protein uL5 from Lacticaseibacillus casei (strain BL23) (Lactobacillus casei).